The chain runs to 266 residues: MPQVTMRQMLEAGVHFGHQTRYRHPKMSPNIFGARGKIHIINLEKTVPLFNDAMNFLSAVAQKRGSVLFVGTKRSARDAIKEEAERCGMPYMIQRWLGGTLTNFRTVKQSVARLKELELAETDGTFSKLVKHEVLRLRRESGKLQASLGGIKDMNRIPDAIFVIDIGHEDIAIKEAKKLGIPVVAVVDTNYDPSLVDYPIPGNDDAIRAVQLYARAAADAVLEGKAAMPNAVAVREEEFASAPDAGKKGRQAQPKKGKRASDAAAE.

A disordered region spans residues 238-266 (EFASAPDAGKKGRQAQPKKGKRASDAAAE). A compositionally biased stretch (basic residues) spans 248–258 (KGRQAQPKKGK).

Belongs to the universal ribosomal protein uS2 family.

This is Small ribosomal subunit protein uS2 from Xylella fastidiosa (strain M12).